The sequence spans 244 residues: Venom nerve growth factor 2 (244 aa).

Positions 1–18 (MSMLCYTLIIAFLIGIWA) are cleaved as a signal peptide. Positions 19 to 125 (APKSEDNVPL…TLNRNIRAKR (107 aa)) are excised as a propeptide. Positions 47 to 66 (GLKTSRNTDQRHPAPKKAED) are enriched in basic and acidic residues. The segment at 47-69 (GLKTSRNTDQRHPAPKKAEDQEL) is disordered. Cystine bridges form between cysteine 139/cysteine 205 and cysteine 181/cysteine 233.

The protein belongs to the NGF-beta family. As to quaternary structure, homodimer; non-covalently linked. In terms of tissue distribution, expressed by the venom gland.

Its subcellular location is the secreted. In terms of biological role, nerve growth factor is important for the development and maintenance of the sympathetic and sensory nervous systems. It stimulates division and differentiation of sympathetic and embryonic sensory neurons as well as basal forebrain cholinergic neurons in the brain. Its relevance in the snake venom is not clear. However, it has been shown to inhibit metalloproteinase-dependent proteolysis of platelet glycoprotein Ib alpha, suggesting a metalloproteinase inhibition to prevent metalloprotease autodigestion and/or protection against prey proteases. Binds a lipid between the two protein chains in the homodimer. The lipid-bound form promotes histamine relase from mouse mast cells, contrary to the lipid-free form. The polypeptide is Venom nerve growth factor 2 (Notechis scutatus scutatus (Mainland tiger snake)).